The following is a 1499-amino-acid chain: Phospholipid-transporting ATPase VA (1499 aa).

Positions 1–53 (MEREPAGTEEPGPPGRRRRREGRTRTVRSNLLPPPGAEDPAAGAAKGERRRRR) are disordered. The Cytoplasmic portion of the chain corresponds to 1–86 (MEREPAGTEE…KNLFEQFHRP (86 aa)). Positions 15–26 (GRRRRREGRTRT) are enriched in basic residues. A helical membrane pass occupies residues 87–106 (ANVYFVFIALLNFVPAVNAF). Residues 107 to 110 (QPGL) are Exoplasmic loop-facing. Residues 111–128 (ALAPVLFILAITAFRDLW) form a helical membrane-spanning segment. The Cytoplasmic portion of the chain corresponds to 129–309 (EDYSRHRSDH…SKLERQMNCD (181 aa)). The chain crosses the membrane as a helical span at residues 310–332 (VLWCVLLLVCMSLFSAVGHGLWI). The Exoplasmic loop segment spans residues 333–362 (WRYQEKKSLFYVPKSDGSSLSPVTAAVYSF). The chain crosses the membrane as a helical span at residues 363 to 384 (LTMIIVLQVLIPISLYVSIEIV). The Cytoplasmic portion of the chain corresponds to 385 to 1087 (KACQVYFINQ…GHWCYSRLAN (703 aa)). Aspartate 427 functions as the 4-aspartylphosphate intermediate in the catalytic mechanism. ATP-binding residues include aspartate 427, lysine 428, and threonine 429. Aspartate 427 lines the Mg(2+) pocket. Mg(2+) is bound at residue threonine 429. A disordered region spans residues 464 to 531 (ADSEEEEVVP…AFSSPMEKDI (68 aa)). Serine 466 carries the phosphoserine modification. Polar residues predominate over residues 477-499 (SVSQRGSIGSHQSVRVVHRTQST). 9 residues coordinate ATP: glutamate 700, phenylalanine 742, lysine 766, arginine 809, threonine 889, glycine 890, aspartate 891, arginine 1005, and lysine 1011. Aspartate 1031 provides a ligand contact to Mg(2+). Positions 1034 and 1035 each coordinate ATP. Aspartate 1035 is a Mg(2+) binding site. The helical transmembrane segment at 1088 to 1108 (MVLYFFYKNTMFVGLLFWFQF) threads the bilayer. Residues 1109–1119 (FCGFSASTMID) are Exoplasmic loop-facing. A helical transmembrane segment spans residues 1120 to 1140 (QWYLIFFNLLFSSLPPLVTGV). Residues 1141–1170 (LDRDVPANVLLTNPQLYKSGQNMEEYRPRT) lie on the Cytoplasmic side of the membrane. The helical transmembrane segment at 1171–1192 (FWFNMADAAFQSLVCFSIPYLA) threads the bilayer. Topologically, residues 1193–1199 (YYDSNVD) are exoplasmic loop. The chain crosses the membrane as a helical span at residues 1200–1222 (LFTWGTPIVTIALLTFLLHLGIE). Residues 1223–1228 (TKTWTW) are Cytoplasmic-facing. The helical transmembrane segment at 1229 to 1249 (LNWITCGFSVLLFFTVALIYN) threads the bilayer. At 1250-1267 (ASCATCYPPSNPYWTMQA) the chain is on the exoplasmic loop side. Residues 1268-1292 (LLGDPVFYLTCLMTPVAALLPRLFF) traverse the membrane as a helical segment. The Cytoplasmic portion of the chain corresponds to 1293–1499 (RSLQGRVFPT…LIGASSRRSQ (207 aa)). Disordered regions lie at residues 1311–1356 (TRKS…PSWH) and 1464–1499 (DGQA…RRSQ). Positions 1330–1340 (LPKDSGTEHSS) are enriched in basic and acidic residues. Positions 1341–1356 (GRTVKTSVPLSQPSWH) are enriched in polar residues.

Belongs to the cation transport ATPase (P-type) (TC 3.A.3) family. Type IV subfamily. In terms of assembly, component of a P4-ATPase flippase complex which consists of a catalytic alpha subunit ATP10A and an accessory beta subunit TMEM30A. Requires Mg(2+) as cofactor. Autophosphorylated at the conserved aspartate of the P-type ATPase signature sequence. Widely expressed, with highest levels in kidney, followed by lung, brain, prostate, testis, ovary and small intestine.

The protein localises to the cell membrane. The protein resides in the endoplasmic reticulum membrane. The catalysed reaction is ATP + H2O + phospholipidSide 1 = ADP + phosphate + phospholipidSide 2.. It catalyses the reaction a 1,2-diacyl-sn-glycero-3-phosphocholine(out) + ATP + H2O = a 1,2-diacyl-sn-glycero-3-phosphocholine(in) + ADP + phosphate + H(+). It carries out the reaction a beta-D-glucosyl-(1&lt;-&gt;1')-N-acylsphing-4-enine(out) + ATP + H2O = a beta-D-glucosyl-(1&lt;-&gt;1')-N-acylsphing-4-enine(in) + ADP + phosphate + H(+). Inhibited under hypotonic conditions. Its function is as follows. Catalytic component of P4-ATPase flippase complex, which catalyzes the hydrolysis of ATP coupled to the transport of phosphatidylcholine (PC) from the outer to the inner leaflet of the plasma membrane. Initiates inward plasma membrane bending and recruitment of Bin/amphiphysin/Rvs (BAR) domain-containing proteins involved in membrane tubulation and cell trafficking. Facilitates ITGB1/beta1 integrin endocytosis, delaying cell adhesion and cell spreading on extracellular matrix. Has low flippase activity toward glucosylceramide (GlcCer). The sequence is that of Phospholipid-transporting ATPase VA from Homo sapiens (Human).